The primary structure comprises 329 residues: Phenylalanine--tRNA ligase alpha subunit (329 aa).

Residue glutamate 254 participates in Mg(2+) binding.

This sequence belongs to the class-II aminoacyl-tRNA synthetase family. Phe-tRNA synthetase alpha subunit type 1 subfamily. In terms of assembly, tetramer of two alpha and two beta subunits. The cofactor is Mg(2+).

The protein resides in the cytoplasm. The enzyme catalyses tRNA(Phe) + L-phenylalanine + ATP = L-phenylalanyl-tRNA(Phe) + AMP + diphosphate + H(+). The polypeptide is Phenylalanine--tRNA ligase alpha subunit (Histophilus somni (strain 2336) (Haemophilus somnus)).